A 501-amino-acid chain; its full sequence is MKYILSIDQGTTSSRAIVFDKNANIKGIAQKEFTQIYPQPSWVEHDPTEIWGSQLGVITEALANSRILPNEVDAIGITNQRETTVIWEKNTGKPIYNAIVWQDRRTAKICDQLTKEGKDKIILEKTGLVLDSYFSGTKILWILDNVEGARQKAENGELCFGTIDTWLLWNLTQKKVHATDYSNASRTLLLNIKTLEWDDELLNILNIPKAILPELKESSTIYGKTDKSLFGAEIPIAGIAGDQFAATFGQACLKKGMAKNTYGTGCFLTVNIGKEPIINHERLLTSIAWGRKKSVTYVLEGSVFIGGAVIQWLRDGLEFFRKSSDAESLASSASDNGGVYFVPAFVGLGAPHWDSYARGTIIGITRGSTKAHITRAALESIAFQSFDILNTMKKSIPNFEIKELRVDGGASQNNLLMQFQADLLECKVVRPKITETTALGAAYLAGLASGYWQSAEEIVSLWQVDKIFEPSMPKNQKEKLLENWNRAIERSKSWIQNSHSL.

T11 contributes to the ADP binding site. T11, T12, and S13 together coordinate ATP. Position 11 (T11) interacts with sn-glycerol 3-phosphate. R15 provides a ligand contact to ADP. Residues R81, E82, Y133, and D242 each coordinate sn-glycerol 3-phosphate. Glycerol-binding residues include R81, E82, Y133, D242, and Q243. Residues T264 and G307 each coordinate ADP. Residues T264, G307, Q311, and G409 each contribute to the ATP site. ADP is bound by residues G409 and N413.

The protein belongs to the FGGY kinase family.

The catalysed reaction is glycerol + ATP = sn-glycerol 3-phosphate + ADP + H(+). The protein operates within polyol metabolism; glycerol degradation via glycerol kinase pathway; sn-glycerol 3-phosphate from glycerol: step 1/1. With respect to regulation, inhibited by fructose 1,6-bisphosphate (FBP). Its function is as follows. Key enzyme in the regulation of glycerol uptake and metabolism. Catalyzes the phosphorylation of glycerol to yield sn-glycerol 3-phosphate. This Borreliella afzelii (strain PKo) (Borrelia afzelii) protein is Glycerol kinase.